We begin with the raw amino-acid sequence, 416 residues long: Adenylosuccinate synthetase (416 aa).

Residues 12–18 (GDEGKGK) and 40–42 (GHT) each bind GTP. The active-site Proton acceptor is the D13. Positions 13 and 40 each coordinate Mg(2+). Residues 13 to 16 (DEGK), 38 to 41 (NAGH), T125, R139, Q219, T234, and R298 each bind IMP. Residue H41 is the Proton donor of the active site. Substrate is bound at residue 294–300 (TVTGRKR). GTP-binding positions include R300, 326–328 (KLD), and 404–406 (STS).

The protein belongs to the adenylosuccinate synthetase family. Homodimer. Mg(2+) serves as cofactor.

The protein resides in the cytoplasm. The enzyme catalyses IMP + L-aspartate + GTP = N(6)-(1,2-dicarboxyethyl)-AMP + GDP + phosphate + 2 H(+). The protein operates within purine metabolism; AMP biosynthesis via de novo pathway; AMP from IMP: step 1/2. Its function is as follows. Plays an important role in the de novo pathway of purine nucleotide biosynthesis. Catalyzes the first committed step in the biosynthesis of AMP from IMP. The polypeptide is Adenylosuccinate synthetase (Aliarcobacter butzleri (strain RM4018) (Arcobacter butzleri)).